A 251-amino-acid polypeptide reads, in one-letter code: tRNA (guanine-N(1)-)-methyltransferase (251 aa).

S-adenosyl-L-methionine contacts are provided by residues glycine 113 and 133-138 (IGDYVL).

Belongs to the RNA methyltransferase TrmD family. As to quaternary structure, homodimer.

It localises to the cytoplasm. It carries out the reaction guanosine(37) in tRNA + S-adenosyl-L-methionine = N(1)-methylguanosine(37) in tRNA + S-adenosyl-L-homocysteine + H(+). Specifically methylates guanosine-37 in various tRNAs. This is tRNA (guanine-N(1)-)-methyltransferase from Methylococcus capsulatus (strain ATCC 33009 / NCIMB 11132 / Bath).